Here is a 149-residue protein sequence, read N- to C-terminus: Transcriptional repressor NrdR (149 aa).

The segment at 3–34 (CPFCFAVDTKVIDSRLVGEGSSVRRRRQCLVC) is a zinc-finger region. In terms of domain architecture, ATP-cone spans 49–139 (PRVVKSNDVR…VYRSFEDIKE (91 aa)).

This sequence belongs to the NrdR family. Zn(2+) serves as cofactor.

In terms of biological role, negatively regulates transcription of bacterial ribonucleotide reductase nrd genes and operons by binding to NrdR-boxes. This Escherichia coli O139:H28 (strain E24377A / ETEC) protein is Transcriptional repressor NrdR.